The primary structure comprises 68 residues: Protein SrnB (68 aa).

Residues Tyr23–Phe42 traverse the membrane as a helical segment.

This sequence belongs to the Hok/Gef family.

The protein resides in the cell inner membrane. In terms of biological role, toxic component of a type I toxin-antitoxin (TA) system. Its normal function is believed to be effective plasmid stabilization through postsegregational killing of cells that have lost the F plasmid. Promotes degradation of stable RNA in E.coli. The sequence is that of Protein SrnB (srnB) from Escherichia coli (strain K12).